A 316-amino-acid polypeptide reads, in one-letter code: Very-long-chain 3-oxooacyl-coA reductase let-767 (316 aa).

Residues 47 to 76 and Asp-106 each bind NADP(+); that span reads ASWA…NVLL. Ser-189 is a substrate binding site. The Proton acceptor role is filled by Tyr-202. Lys-206 contributes to the NADP(+) binding site.

This sequence belongs to the short-chain dehydrogenases/reductases (SDR) family. 17-beta-HSD 3 subfamily. In terms of tissue distribution, expressed in the gut of larva and adult.

It carries out the reaction a very-long-chain (3R)-3-hydroxyacyl-CoA + NADP(+) = a very-long-chain 3-oxoacyl-CoA + NADPH + H(+). It catalyses the reaction (omega-1)-methyl-(3R)-hydroxy-fatty acyl-CoA + NADP(+) = (omega-1)-methyl-3-oxo-fatty acyl-CoA + NADPH + H(+). The enzyme catalyses a 17beta-hydroxy steroid + NADP(+) = a 17-oxo steroid + NADPH + H(+). It participates in lipid metabolism; fatty acid biosynthesis. In terms of biological role, required for branched-chain fatty acid synthesis (such as (omega-1)-methyl-fatty acids). Catalyzes the reduction of the 3-keto-fatty acyl-CoA intermediate that is formed in each cycle of fatty acid elongation. Very long-chain fatty acids (VLCFAs) serve as precursors for ceramide and sphingolipids. Involved in hormone production as it metabolizes 4-androstendione (androst-4-ene-3,17-dione) into testosterone and estrone into estradiol (17beta-estradiol) in vitro, but the physiological steroid substrate is unknown. In Caenorhabditis elegans, this protein is Very-long-chain 3-oxooacyl-coA reductase let-767 (let-767).